We begin with the raw amino-acid sequence, 300 residues long: Estradiol 17-beta-dehydrogenase 11 (300 aa).

An N-terminal signal peptide occupies residues 1-18 (MKILLDLLLLLPLLIVCC). 40-67 (LITGAGHGIGRLTAYEFAKLKSKLVLWD) serves as a coordination point for NADP(+). S172 lines the substrate pocket. Y185 functions as the Proton acceptor in the catalytic mechanism. An NADP(+)-binding site is contributed by K189.

Belongs to the short-chain dehydrogenases/reductases (SDR) family. 17-beta-HSD 3 subfamily.

The protein localises to the endoplasmic reticulum. It is found in the lipid droplet. It catalyses the reaction 17beta-estradiol + NAD(+) = estrone + NADH + H(+). The catalysed reaction is 17beta-estradiol + NADP(+) = estrone + NADPH + H(+). In terms of biological role, can convert androstan-3-alpha,17-beta-diol (3-alpha-diol) to androsterone in vitro, suggesting that it may participate in androgen metabolism during steroidogenesis. May act by metabolizing compounds that stimulate steroid synthesis and/or by generating metabolites that inhibit it. Has no activity toward DHEA (dehydroepiandrosterone), or A-dione (4-androste-3,17-dione), and only a slight activity toward testosterone to A-dione. This chain is Estradiol 17-beta-dehydrogenase 11 (HSD17B11), found in Macaca fascicularis (Crab-eating macaque).